We begin with the raw amino-acid sequence, 398 residues long: Arylacetamide deacetylase (398 aa).

Residues 1-5 (MGKTI) are Cytoplasmic-facing. A helical; Signal-anchor for type II membrane protein membrane pass occupies residues 6–26 (SLLISVVLVAYYLYIPLPDAI). The Lumenal portion of the chain corresponds to 27–398 (EEPWKVVWET…QYLSWLIKNL (372 aa)). Positions 110-112 (HGG) match the Involved in the stabilization of the negatively charged intermediate by the formation of the oxyanion hole motif. A disulfide bridge connects residues C115 and C339. The active site involves S188. A glycan (N-linked (GlcNAc...) asparagine) is linked at N281. Active-site residues include D342 and H372.

This sequence belongs to the 'GDXG' lipolytic enzyme family. In terms of processing, N-glycosylated. In terms of tissue distribution, highest levels in liver with lower levels in jejunum and kidney.

It is found in the endoplasmic reticulum membrane. It localises to the microsome membrane. The catalysed reaction is a triacylglycerol + H2O = a diacylglycerol + a fatty acid + H(+). In terms of biological role, displays cellular triglyceride lipase activity in liver, increases the levels of intracellular fatty acids derived from the hydrolysis of newly formed triglyceride stores and plays a role in very low-density lipoprotein assembly. Displays serine esterase activity in liver. Deacetylates a variety of arylacetamide substrates, including xenobiotic compounds and procarcinogens, converting them to the primary arylamide compounds and increasing their toxicity. The polypeptide is Arylacetamide deacetylase (Aadac) (Mus musculus (Mouse)).